We begin with the raw amino-acid sequence, 1040 residues long: MQVLPPGRTGGPSRLFIMRPVATTLLMVAILLAGIIGYRFLPVSALPEVDYPTIQVVTLYPGASPDVVTSAITAPLERQFGQMSGLKQMSSQSSGGASVVTLQFQLTLPLDVAEQEVQAAINAATNLLPSDLPNPPVYSKVNPADPPIMTLAVTSSAIPMTQVEDMVETRVAQKISQVSGVGLVTLAGGQRPAVRVKLNAQAIAALGLTSETVRTAITSANVNSAKGSLDGPARAVTLSANDQMQSAEDYRRLIIAYQNGAPIRLGDVASVEQGAENSWLGAWANQQRAIVMNVQRQPGANIIDTADSIRQMLPQLTESLPKSVKVQVLSDRTTNIRASVRDTQFELMLAIALVVMIIYLFLRNVPATIIPGVAVPLSLVGTFAVMVFLDFSINNLTLMALTIATGFVVDDAIVVIENISRYIEKGEKPLAAALKGAGEIGFTIISLTFSLIAVLIPLLFMGDIVGRLFREFAVTLAVAILISAVVSLTLTPMMCARMLSHESLRKQNRFSRASERFFERVIAVYGRWLSRVLNHPWLTLGVALSTLALSIILWVFIPKGFFPIQDNGIIQGTLQAPQSVSFASMAERQRQVASIILKDPAVESLTSFVGVDGTNPALNSARLQINLKPLDERDDRVQTVISRLQQAVDGVPGVALYLQPTQDLTIDTTVSRTQYQFTLQANSLEALSTWVPPLLSRLQAQPQLADVSSDWQDKGLAAYIKVDRDSASRLGISMADVDNALYNAFGQRLISTIYTQANQYRVVLEQDTEATPGLAALENIRLTSSDGGIVPLTAIATVEQRFTPLSVNHLDQFPVTTISFNVPDNYSLGEAVEAILAAEQSLDFPTDIRTQFQGSSLAFQSALGSTVWLVVAAVVAMYIVLGVLYESFIHPITILSTLPTAGVGALLALWLAGSELDVIAIIGIILLIGIVKKNAIMMIDFALAAEREQGMPPREAIYQACLLRFRPILMTTLAALLGALPLMLSTGVGAELRRPLGIGMVGGLMLSQVLTLFTTPVIYLLFDRLSLHLKRRFPRQEEEA.

The next 12 helical transmembrane spans lie at 16 to 36 (FIMRPVATTLLMVAILLAGII), 342 to 362 (DTQFELMLAIALVVMIIYLFL), 369 to 389 (IIPGVAVPLSLVGTFAVMVFL), 396 to 416 (LTLMALTIATGFVVDDAIVVI), 440 to 460 (IGFTIISLTFSLIAVLIPLLF), 472 to 492 (FAVTLAVAILISAVVSLTLTP), 537 to 557 (WLTLGVALSTLALSIILWVFI), 863 to 883 (LGSTVWLVVAAVVAMYIVLGV), 888 to 908 (FIHPITILSTLPTAGVGALLA), 911 to 931 (LAGSELDVIAIIGIILLIGIV), 968 to 988 (ILMTTLAALLGALPLMLSTGV), and 998 to 1018 (IGMVGGLMLSQVLTLFTTPVI).

This sequence belongs to the resistance-nodulation-cell division (RND) (TC 2.A.6) family. MdtB subfamily. As to quaternary structure, part of a tripartite efflux system composed of MdtA, MdtB and MdtC. MdtB forms a heteromultimer with MdtC.

The protein localises to the cell inner membrane. The chain is Multidrug resistance protein MdtB from Klebsiella pneumoniae subsp. pneumoniae (strain ATCC 700721 / MGH 78578).